Consider the following 243-residue polypeptide: Proteasome subunit beta (243 aa).

Residues 1–46 (MFNPNNGSEFARNRARLDDTPNPYEPEVGSLPEGDRSQAGSDTVNK) are disordered. A propeptide spans 1–48 (MFNPNNGSEFARNRARLDDTPNPYEPEVGSLPEGDRSQAGSDTVNKTG) (removed in mature form; by autocatalysis). Threonine 49 functions as the Nucleophile in the catalytic mechanism.

It belongs to the peptidase T1B family. The 20S proteasome core is composed of 14 alpha and 14 beta subunits that assemble into four stacked heptameric rings, resulting in a barrel-shaped structure. The two inner rings, each composed of seven catalytic beta subunits, are sandwiched by two outer rings, each composed of seven alpha subunits. The catalytic chamber with the active sites is on the inside of the barrel. Has a gated structure, the ends of the cylinder being occluded by the N-termini of the alpha-subunits. Is capped at one or both ends by the proteasome regulatory ATPase, PAN.

It is found in the cytoplasm. It carries out the reaction Cleavage of peptide bonds with very broad specificity.. With respect to regulation, the formation of the proteasomal ATPase PAN-20S proteasome complex, via the docking of the C-termini of PAN into the intersubunit pockets in the alpha-rings, triggers opening of the gate for substrate entry. Interconversion between the open-gate and close-gate conformations leads to a dynamic regulation of the 20S proteasome proteolysis activity. Component of the proteasome core, a large protease complex with broad specificity involved in protein degradation. In Halobacterium salinarum (strain ATCC 29341 / DSM 671 / R1), this protein is Proteasome subunit beta.